Reading from the N-terminus, the 193-residue chain is MTDYLLLFVGTVLVNNFVLVKFLGLCPFMGVSKKLESAIGMGMATTFVMTLATIFSWIIDHLILVPLELVYLRTMAFILVIAVVVQFTEMVVRKTSPALYRLLGIYLPLITTNCAVLGVALLSINLNHTFMQSALYGFSAAVGFSLVMVLFAAIRERLVVADVPLPFRGNAIALVTAGLMSLAFMGFSGLVKF.

Transmembrane regions (helical) follow at residues 5 to 25, 47 to 67, 72 to 92, 102 to 122, 134 to 154, and 171 to 191; these read LLLFVGTVLVNNFVLVKFLGL, FVMTLATIFSWIIDHLILVPL, LRTMAFILVIAVVVQFTEMVV, LLGIYLPLITTNCAVLGVALL, ALYGFSAAVGFSLVMVLFAAI, and AIALVTAGLMSLAFMGFSGLV.

Belongs to the NqrDE/RnfAE family. As to quaternary structure, the complex is composed of six subunits: RnfA, RnfB, RnfC, RnfD, RnfE and RnfG.

It localises to the cell inner membrane. In terms of biological role, part of a membrane-bound complex that couples electron transfer with translocation of ions across the membrane. In Cronobacter sakazakii (strain ATCC BAA-894) (Enterobacter sakazakii), this protein is Ion-translocating oxidoreductase complex subunit A.